The chain runs to 155 residues: Protein SprT-like (155 aa).

The 139-residue stretch at 7 to 145 (QQHMEEVSLQ…GSCGGRLKQT (139 aa)) folds into the SprT-like domain. Residue H67 participates in Zn(2+) binding. E68 is an active-site residue. H71 provides a ligand contact to Zn(2+).

It belongs to the SprT family. It depends on Zn(2+) as a cofactor.

The protein resides in the cytoplasm. This is Protein SprT-like from Listeria innocua serovar 6a (strain ATCC BAA-680 / CLIP 11262).